We begin with the raw amino-acid sequence, 132 residues long: Succinate dehydrogenase cytochrome b560 subunit (132 aa).

Transmembrane regions (helical) follow at residues 32-49 (LYLVFFLFVLFCSIKFLF) and 59-81 (KFVKTCFFFILSFFIVFIVFSMY). Position 86 (histidine 86) interacts with heme. A helical membrane pass occupies residues 107–127 (VTMSTKLSLSLSLVLVLINCL).

This sequence belongs to the cytochrome b560 family. Forms part of complex II containing four subunits: a 70 kDa flavoprotein (FP), a 27 kDa iron-sulfur protein (IP), a cytochrome B and a membrane-anchoring protein. The cofactor is heme.

It is found in the mitochondrion inner membrane. The protein operates within carbohydrate metabolism; tricarboxylic acid cycle. Membrane-anchoring subunit of succinate dehydrogenase (SDH) that is involved in complex II of the mitochondrial electron transport chain and is responsible for transferring electrons from succinate to ubiquinone (coenzyme Q). This Cyanidium caldarium (Red alga) protein is Succinate dehydrogenase cytochrome b560 subunit (SDH3).